A 104-amino-acid chain; its full sequence is MPEAHMQPAKLQTSLPTTDHGSKKPVSCYLPPLSNAHPMCIEVQNAQNCSSAAATLEPSIISDTCFYKPITKDQLSSRSELNTVRLKCLNSLRGWKILNQLSLT.

A disordered region spans residues 1–23; sequence MPEAHMQPAKLQTSLPTTDHGSK. Over residues 10–19 the composition is skewed to polar residues; the sequence is KLQTSLPTTD.

Expressed at low steady-state level in adult placenta, testis, ovary, prostate, fetal kidney, spleen and skeletal muscle.

This chain is Disrupted in renal carcinoma protein 1 (DIRC1), found in Homo sapiens (Human).